Here is a 443-residue protein sequence, read N- to C-terminus: MERVNVVGAGLAGSEAAWTLLRLGVPVRLFEMRPKRMTPAHGTDRFAEIVCSNSLGGEGETNAKGLLQAEMRRAGSLVMEAADLARVPAGGALAVDREEFSGYITERLRGHPLLEVVREEVREIPPGITVLATGPLTSEALAEALKRRFGDHFLAYYDAASPIVLYESIDLTKCFRAGRYGQSADYLNCPMTEEEYRRFHQALLEAQRHTPHDWEKLEFFEACVPVEELARRGYQTLLFGPMKPVGLVDPRTGKEPFAVVQLRQEDKAGRMWSLVGFQTGLKWPEQKRLIQMIPGLENAEIVRYGVMHRNTYLNAPRLLGETLEFREAEGLYAAGVLAGVEGYLESAATGFLAGLNAARRALGLPPVAPPEESMLGGLVRYLATANPEGFQPMYANWGLVPPVEGRMGKKEKRQAMYRRGLEAFSAWLSGLNPPLPRPEAALV.

Position 8–13 (8–13) interacts with FAD; the sequence is GAGLAG.

The protein belongs to the MnmG family. TrmFO subfamily. FAD is required as a cofactor.

Its subcellular location is the cytoplasm. It carries out the reaction uridine(54) in tRNA + (6R)-5,10-methylene-5,6,7,8-tetrahydrofolate + NADH + H(+) = 5-methyluridine(54) in tRNA + (6S)-5,6,7,8-tetrahydrofolate + NAD(+). The enzyme catalyses uridine(54) in tRNA + (6R)-5,10-methylene-5,6,7,8-tetrahydrofolate + NADPH + H(+) = 5-methyluridine(54) in tRNA + (6S)-5,6,7,8-tetrahydrofolate + NADP(+). Functionally, catalyzes the folate-dependent formation of 5-methyl-uridine at position 54 (M-5-U54) in all tRNAs. This is Methylenetetrahydrofolate--tRNA-(uracil-5-)-methyltransferase TrmFO from Thermus thermophilus (strain ATCC BAA-163 / DSM 7039 / HB27).